Reading from the N-terminus, the 244-residue chain is Carboxy-S-adenosyl-L-methionine synthase (244 aa).

Residues Tyr-40, 65 to 67, 90 to 91, 119 to 120, Asn-134, and Arg-201 contribute to the S-adenosyl-L-methionine site; these read GCS, DN, and DI.

The protein belongs to the class I-like SAM-binding methyltransferase superfamily. Cx-SAM synthase family. In terms of assembly, homodimer.

It carries out the reaction prephenate + S-adenosyl-L-methionine = carboxy-S-adenosyl-L-methionine + 3-phenylpyruvate + H2O. Functionally, catalyzes the conversion of S-adenosyl-L-methionine (SAM) to carboxy-S-adenosyl-L-methionine (Cx-SAM). This is Carboxy-S-adenosyl-L-methionine synthase from Geobacter sp. (strain M21).